Consider the following 212-residue polypeptide: RNA chaperone ProQ (212 aa).

The segment at 107–153 (QDKAKAKRVAQAKSANPAAKTAKKPVKKPVAKRPKQTQSSKPAKEPV) is disordered. Residues 117–126 (QAKSANPAAK) show a composition bias toward low complexity. Over residues 127 to 141 (TAKKPVKKPVAKRPK) the composition is skewed to basic residues.

Belongs to the ProQ family.

It is found in the cytoplasm. Functionally, RNA chaperone with significant RNA binding, RNA strand exchange and RNA duplexing activities. In Shewanella halifaxensis (strain HAW-EB4), this protein is RNA chaperone ProQ.